A 407-amino-acid chain; its full sequence is Multifunctional CCA protein (407 aa).

ATP-binding residues include glycine 8 and arginine 11. 2 residues coordinate CTP: glycine 8 and arginine 11. Aspartate 21 and aspartate 23 together coordinate Mg(2+). Arginine 91, arginine 137, and arginine 140 together coordinate ATP. Residues arginine 91, arginine 137, and arginine 140 each contribute to the CTP site. The region spanning 225–326 (CGDHVMRVLD…LRLLKDCDAL (102 aa)) is the HD domain.

Belongs to the tRNA nucleotidyltransferase/poly(A) polymerase family. Bacterial CCA-adding enzyme type 1 subfamily. In terms of assembly, monomer. Can also form homodimers and oligomers. It depends on Mg(2+) as a cofactor. Requires Ni(2+) as cofactor.

It carries out the reaction a tRNA precursor + 2 CTP + ATP = a tRNA with a 3' CCA end + 3 diphosphate. The catalysed reaction is a tRNA with a 3' CCA end + 2 CTP + ATP = a tRNA with a 3' CCACCA end + 3 diphosphate. Catalyzes the addition and repair of the essential 3'-terminal CCA sequence in tRNAs without using a nucleic acid template. Adds these three nucleotides in the order of C, C, and A to the tRNA nucleotide-73, using CTP and ATP as substrates and producing inorganic pyrophosphate. tRNA 3'-terminal CCA addition is required both for tRNA processing and repair. Also involved in tRNA surveillance by mediating tandem CCA addition to generate a CCACCA at the 3' terminus of unstable tRNAs. While stable tRNAs receive only 3'-terminal CCA, unstable tRNAs are marked with CCACCA and rapidly degraded. This Chromobacterium violaceum (strain ATCC 12472 / DSM 30191 / JCM 1249 / CCUG 213 / NBRC 12614 / NCIMB 9131 / NCTC 9757 / MK) protein is Multifunctional CCA protein.